The primary structure comprises 94 residues: DNA-directed RNA polymerase subunit Rpo11 (94 aa).

This sequence belongs to the archaeal Rpo11/eukaryotic RPB11/RPC19 RNA polymerase subunit family. Part of the RNA polymerase complex.

The protein resides in the cytoplasm. It carries out the reaction RNA(n) + a ribonucleoside 5'-triphosphate = RNA(n+1) + diphosphate. In terms of biological role, DNA-dependent RNA polymerase (RNAP) catalyzes the transcription of DNA into RNA using the four ribonucleoside triphosphates as substrates. The polypeptide is DNA-directed RNA polymerase subunit Rpo11 (Halobacterium salinarum (strain ATCC 700922 / JCM 11081 / NRC-1) (Halobacterium halobium)).